The sequence spans 406 residues: MAKKEVKKIVLAYSGGLDTSIILKWLKNEYGCEVVTFSADLGQGDELEPVREKAFKTGADKVYIDDLREEFVRDFVFPMFRANAIYEGSYLLGTSIARPLIAKRQMEIAQIEGCDAVSHGATGKGNDQVRFELAYYHFNPGITVVAPWREWKLNSRQALINYAKRNDIPIPITKKRPWSSDRNLLHISFEGGILEDTWLEPPENMFVLTKPPEKAPNKPQYVEIEFEKGNAVAVDGVRMSPAELLAHLNTIGGEHGIGRVDLLENRSVGMKSRGVYETPGGTILREAHMAVEQITMDREVMHLRDSLIPRYAEMIYNGYWFSPEREMMQCMIDESQKTVNGVARLKLYKGHCRTVGRKSESDSLFNLDFATFEKDQVYNQADAEGFIKLNSLRLRIRSLMLANKNK.

Residues 12–20 (AYSGGLDTS) and Ala-39 contribute to the ATP site. The L-citrulline site is built by Tyr-90 and Ser-95. Gly-120 contributes to the ATP binding site. The L-aspartate site is built by Thr-122, Asn-126, and Asp-127. Asn-126 lines the L-citrulline pocket. Arg-130, Ser-179, Ser-188, Glu-264, and Tyr-276 together coordinate L-citrulline.

The protein belongs to the argininosuccinate synthase family. Type 1 subfamily. In terms of assembly, homotetramer.

It localises to the cytoplasm. The enzyme catalyses L-citrulline + L-aspartate + ATP = 2-(N(omega)-L-arginino)succinate + AMP + diphosphate + H(+). The protein operates within amino-acid biosynthesis; L-arginine biosynthesis; L-arginine from L-ornithine and carbamoyl phosphate: step 2/3. The sequence is that of Argininosuccinate synthase from Geobacter sp. (strain M21).